A 659-amino-acid polypeptide reads, in one-letter code: 1,4-alpha-glucan branching enzyme GlgB 2 (659 aa).

A disordered region spans residues 1–26 (MRNYKELKHEKNGNVTEKIGENKGKS). D337 (nucleophile) is an active-site residue. The Proton donor role is filled by E390.

The protein belongs to the glycosyl hydrolase 13 family. GlgB subfamily. Monomer.

The enzyme catalyses Transfers a segment of a (1-&gt;4)-alpha-D-glucan chain to a primary hydroxy group in a similar glucan chain.. It functions in the pathway glycan biosynthesis; glycogen biosynthesis. Functionally, catalyzes the formation of the alpha-1,6-glucosidic linkages in glycogen by scission of a 1,4-alpha-linked oligosaccharide from growing alpha-1,4-glucan chains and the subsequent attachment of the oligosaccharide to the alpha-1,6 position. The sequence is that of 1,4-alpha-glucan branching enzyme GlgB 2 from Clostridium perfringens (strain SM101 / Type A).